A 145-amino-acid chain; its full sequence is MFDNLQRKFLNLIGIEIEEEDKPQESTKAKEENVKPKHETPKVVTIGKANQTEVTVYNLKLFDEVVKVCDALRENKIVVFNLEQVAEDHIQRIIDFVSGAVYVLDAKIHKVSKKIFVVVPRSIDLEVDEQLKEEFRTKGVFAWLK.

The segment at 21–41 (DKPQESTKAKEENVKPKHETP) is disordered. Over residues 23–41 (PQESTKAKEENVKPKHETP) the composition is skewed to basic and acidic residues.

The protein belongs to the SepF family. In terms of assembly, homodimer. Interacts with FtsZ.

The protein localises to the cytoplasm. Its function is as follows. Cell division protein that is part of the divisome complex and is recruited early to the Z-ring. Probably stimulates Z-ring formation, perhaps through the cross-linking of FtsZ protofilaments. Its function overlaps with FtsA. This is Cell division protein SepF from Caldicellulosiruptor saccharolyticus (strain ATCC 43494 / DSM 8903 / Tp8T 6331).